The sequence spans 398 residues: RNA exonuclease 3 (398 aa).

The Exonuclease domain occupies 239-385; the sequence is VLALDCEMGF…QDAIAAMDII (147 aa).

The protein belongs to the REXO1/REXO3 family.

The protein localises to the cytoplasm. It localises to the nucleus. Its function is as follows. 3' to 5' exoribonuclease required for proper 3' end maturation of MRP RNA and of the U5L snRNA. The sequence is that of RNA exonuclease 3 (REX3) from Candida glabrata (strain ATCC 2001 / BCRC 20586 / JCM 3761 / NBRC 0622 / NRRL Y-65 / CBS 138) (Yeast).